The primary structure comprises 602 residues: uncharacterized protein (602 aa).

Residues 271-472 (IIDILADILI…RDEEVAKYIF (202 aa)) enclose the MCM domain. 315-322 (TEVGIDKT) is a binding site for ATP.

The protein belongs to the MCM family.

This is an uncharacterized protein from Methanocaldococcus jannaschii (strain ATCC 43067 / DSM 2661 / JAL-1 / JCM 10045 / NBRC 100440) (Methanococcus jannaschii).